Here is a 203-residue protein sequence, read N- to C-terminus: Ras-related protein Rab-7L1 (203 aa).

GTP contacts are provided by Ser33, Lys34, His35, Tyr36, Lys37, and Thr39. The Effector region signature appears at 36 to 44 (YKSTVGVDF). A Phosphothreonine; by LRRK2 modification is found at Thr71. Position 72 is a phosphoserine; by LRRK2 (Ser72). 3 residues coordinate GTP: Lys126, Val156, and Lys157. S-geranylgeranyl cysteine attachment occurs at residues Cys202 and Cys203.

This sequence belongs to the small GTPase superfamily. Rab family. Interacts with LRRK2 (via the N-terminus); this interaction is direct and stimulates kinase activity. Post-translationally, in case of Salmonella enterica serovar Typhimurium (S.typhimurium) infection, is proteolytically cleaved between Gly-41 and Val-42 by the GtgE viral protease encoded on the Gifsy-2 lysogen bacteriophage, which therefore prevents the recruitment of RAB29 to S.typhimurium-containing vacuoles. In contrast, no proteolytically cleavage is detected in S.typhi-infected cells. In terms of tissue distribution, ubiquitous.

The protein resides in the cell membrane. It localises to the cytoplasm. It is found in the perinuclear region. The protein localises to the golgi apparatus. Its subcellular location is the golgi apparatus membrane. The protein resides in the trans-Golgi network. It localises to the vacuole. It is found in the cytoskeleton. The small GTPases Rab are key regulators in vesicle trafficking. Essential for maintaining the integrity of the endosome-trans-Golgi network structure. Together with LRRK2, plays a role in the retrograde trafficking pathway for recycling proteins, such as mannose 6 phosphate receptor (M6PR), between lysosomes and the Golgi apparatus in a retromer-dependent manner. Recruits LRRK2 to the Golgi complex and stimulates LRRK2 kinase activity. Stimulates phosphorylation of RAB10 'Thr-73' by LRRK2. Regulates neuronal process morphology in the intact central nervous system (CNS). May play a role in the formation of typhoid toxin transport intermediates during Salmonella enterica serovar Typhi (S.typhi) epithelial cell infection. This is Ras-related protein Rab-7L1 (RAB29) from Homo sapiens (Human).